The following is a 279-amino-acid chain: MKLCVALDLSTKEECLQLAKELKNLDIWLKVGLRAYLRDGFKFIEELKKVDDFKIFLDLKIHDIPNTMADACEEVSKLGVDMINIHASAGKIAIQEVMTRLSKFSKRPLVLAVSALTSFDEENFFSIYRQKIEEAVINFSKISYENGLDGMVCSVFESKKIKEHTSSNFLTLTPGIRPFGETSDDQKRVANLAMARENLSDYIVVGRPIYKNENPRAVCEKILNKIHRKNISENDIEQNYEVIQQKEWDMCNHFEEWIKTQPDKEHALKEFYAKCGIKY.

Substrate-binding positions include D8, K30, 58-67, T117, R177, Q186, G206, and R207; that span reads DLKIHDIPNT. Residue K60 is the Proton donor of the active site.

Belongs to the OMP decarboxylase family. Type 1 subfamily. As to quaternary structure, homodimer.

It catalyses the reaction orotidine 5'-phosphate + H(+) = UMP + CO2. It functions in the pathway pyrimidine metabolism; UMP biosynthesis via de novo pathway; UMP from orotate: step 2/2. Catalyzes the decarboxylation of orotidine 5'-monophosphate (OMP) to uridine 5'-monophosphate (UMP). The protein is Orotidine 5'-phosphate decarboxylase of Campylobacter jejuni (strain RM1221).